A 232-amino-acid polypeptide reads, in one-letter code: Methylthioribulose-1-phosphate dehydratase (232 aa).

A substrate-binding site is contributed by Cys91. Positions 109, 111, and 191 each coordinate Zn(2+).

This sequence belongs to the aldolase class II family. MtnB subfamily. Zn(2+) serves as cofactor.

It is found in the cytoplasm. It carries out the reaction 5-(methylsulfanyl)-D-ribulose 1-phosphate = 5-methylsulfanyl-2,3-dioxopentyl phosphate + H2O. Its pathway is amino-acid biosynthesis; L-methionine biosynthesis via salvage pathway; L-methionine from S-methyl-5-thio-alpha-D-ribose 1-phosphate: step 2/6. Its function is as follows. Catalyzes the dehydration of methylthioribulose-1-phosphate (MTRu-1-P) into 2,3-diketo-5-methylthiopentyl-1-phosphate (DK-MTP-1-P). This chain is Methylthioribulose-1-phosphate dehydratase, found in Schizosaccharomyces japonicus (strain yFS275 / FY16936) (Fission yeast).